The primary structure comprises 375 residues: Succinyl-diaminopimelate desuccinylase (375 aa).

Histidine 66 lines the Zn(2+) pocket. The active site involves aspartate 68. Aspartate 99 serves as a coordination point for Zn(2+). Catalysis depends on glutamate 133, which acts as the Proton acceptor. Residues glutamate 134, glutamate 162, and histidine 348 each coordinate Zn(2+).

The protein belongs to the peptidase M20A family. DapE subfamily. In terms of assembly, homodimer. The cofactor is Zn(2+). It depends on Co(2+) as a cofactor.

It carries out the reaction N-succinyl-(2S,6S)-2,6-diaminopimelate + H2O = (2S,6S)-2,6-diaminopimelate + succinate. Its pathway is amino-acid biosynthesis; L-lysine biosynthesis via DAP pathway; LL-2,6-diaminopimelate from (S)-tetrahydrodipicolinate (succinylase route): step 3/3. Catalyzes the hydrolysis of N-succinyl-L,L-diaminopimelic acid (SDAP), forming succinate and LL-2,6-diaminopimelate (DAP), an intermediate involved in the bacterial biosynthesis of lysine and meso-diaminopimelic acid, an essential component of bacterial cell walls. This Enterobacter sp. (strain 638) protein is Succinyl-diaminopimelate desuccinylase.